The following is a 1070-amino-acid chain: TSC22 domain family protein 1 (1070 aa).

The tract at residues 1–98 (MHQPPESTAA…SQAQLQAQPL (98 aa)) is required for interaction with TGFBR1 and promotion of TGF-beta signaling. Disordered stretches follow at residues 1–110 (MHQP…KKSG), 125–289 (ISSN…PASV), 458–487 (VTSE…VGSG), 604–637 (YSQA…STQM), and 830–858 (TSQV…AQTP). Positions 36 to 45 (GSASALNAAG) are enriched in low complexity. Positions 58–70 (FPPPSLLQPPPPA) are enriched in pro residues. Residues 84 to 100 (SLNLLSQAQLQAQPLAP) are compositionally biased toward low complexity. The span at 133–142 (EDTESYDDLD) shows a compositional bias: acidic residues. The span at 216–240 (HPHHLHHHHHIHHGHHLQHGHHHPS) shows a compositional bias: basic residues. Low complexity predominate over residues 241–250 (HVAVASASIP). The span at 261 to 271 (KLSTTGSSDSI) shows a compositional bias: polar residues. Serine 263 is subject to Phosphoserine. Composition is skewed to low complexity over residues 272–289 (TPVA…PASV) and 465–478 (TSGS…STRS). Pro residues predominate over residues 611–622 (VQTPLPGAPPPQ). The span at 830 to 845 (TSQVSSAGPSGMPSAP) shows a compositional bias: low complexity. Residues 849-858 (VPPQNIAQTP) are compositionally biased toward polar residues. Positions 1003-1024 (LKEQIKELIEKNSQLEQENNLL) are leucine-zipper. The segment at 1034-1070 (AQFQAQLQTGSPPATTQPQGTTQPPAQPASQGSGPTA) is disordered. Residues 1041–1070 (QTGSPPATTQPQGTTQPPAQPASQGSGPTA) show a composition bias toward low complexity.

It belongs to the TSC-22/Dip/Bun family. Forms homodimers. Forms heterodimers. Component of a complex composed of TSC22D1 (via N-terminus), TGFBR1 and TGFBR2; the interaction between TSC22D1 and TGFBR1 is inhibited by SMAD7 and promoted by TGFB1. Interacts with SMAD7; the interaction requires TGF-beta and the interaction is inhibited by TGFBR1. Interacts with TPT1/fortilin; interaction results in the destabilization of TSC22D1 protein and prevents TSC22D1-mediated apoptosis. Interacts with SMAD4 (via N-terminus). Interacts with ACVRL1/ALK1, ACVR1/ALK2, BMPR1A/ALK3, ACVR1B/ALK4, BMPR1B/ALK6, ACVR2A/ACTRII, and BMPR2. Interacts with SMAD6. Interacts with TFE3; the interaction is enhanced in the presence of TGF-beta. In terms of assembly, forms a heterodimer with TSC22D4/THG1. As to quaternary structure, forms a heterodimer with TSC22D4/THG1. Interacts with histone H1-2. Interacts with GNL3.

The protein resides in the cytoplasm. It localises to the nucleus. It is found in the cell membrane. Its subcellular location is the mitochondrion. Its function is as follows. Transcriptional repressor. Acts on the C-type natriuretic peptide (CNP) promoter. Acts to promote CASP3-mediated apoptosis. Positively regulates TGF-beta signaling by interacting with SMAD7 which inhibits binding of SMAD7 to TGFBR1, preventing recruitment of SMURF ubiquitin ligases to TGFBR1 and inhibiting SMURF-mediated ubiquitination and degradation of TGFBR1. Contributes to enhancement of TGF-beta signaling by binding to and modulating the transcription activator activity of SMAD4. Promotes TGF-beta-induced transcription of COL1A2; via its interaction with TFE3 at E-boxes in the gene proximal promoter. Plays a role in the repression of hematopoietic precursor cell growth. Promotes IL2 deprivation-induced apoptosis in T-lymphocytes, via repression of TSC22D3/GILZ transcription and activation of the caspase cascade. Functionally, may act to negatively regulate TGFB3 signaling and thereby inhibit cell death in mammary gland cells. In terms of biological role, positively regulates cell death in response to TGFB3 during mammary gland involution. This chain is TSC22 domain family protein 1, found in Pongo abelii (Sumatran orangutan).